The primary structure comprises 183 residues: Ubiquitin-conjugating enzyme E2 H (183 aa).

The UBC core domain maps to 1–150 (MSSPSPGKRR…IKEYIQKYAT (150 aa)). K60 carries the post-translational modification N6-acetyllysine. The active-site Glycyl thioester intermediate is the C87. Positions 152 to 183 (EALKEQEEGTGDSSSESSMSDFSEDEAQDMEL) are disordered. A compositionally biased stretch (low complexity) spans 163-172 (DSSSESSMSD). The span at 173-183 (FSEDEAQDMEL) shows a compositional bias: acidic residues.

The protein belongs to the ubiquitin-conjugating enzyme family. Interacts with MAEA and WDR26, components of the CTLH complex that contains GID4, RANBP9 and/or RANBP10, MKLN1, MAEA, RMND5A (or alternatively its paralog RMND5B), GID8, ARMC8, WDR26 and YPEL5. Post-translationally, autoubiquitinated in vitro in the presence of NEDD4L.

It carries out the reaction S-ubiquitinyl-[E1 ubiquitin-activating enzyme]-L-cysteine + [E2 ubiquitin-conjugating enzyme]-L-cysteine = [E1 ubiquitin-activating enzyme]-L-cysteine + S-ubiquitinyl-[E2 ubiquitin-conjugating enzyme]-L-cysteine.. It catalyses the reaction S-ubiquitinyl-[E1 ubiquitin-activating enzyme]-L-cysteine + [acceptor protein]-L-lysine = [E1 ubiquitin-activating enzyme]-L-cysteine + N(6)-monoubiquitinyl-[acceptor protein]-L-lysine.. It functions in the pathway protein modification; protein ubiquitination. Its function is as follows. Accepts ubiquitin from the E1 complex and catalyzes its covalent attachment to other proteins. E2 ubiquitin conjugating enzyme that transfers ubiquitin to MAEA, a core component of the CTLH E3 ubiquitin-protein ligase complex. In vitro catalyzes 'Lys-11'- and 'Lys-48'-linked polyubiquitination. Capable, in vitro, to ubiquitinate histone H2A. The sequence is that of Ubiquitin-conjugating enzyme E2 H (UBE2H) from Homo sapiens (Human).